Reading from the N-terminus, the 751-residue chain is Semaphorin-3C (751 aa).

The signal sequence occupies residues 1–20; sequence MAFRTICVLVGVFICSICVK. Residues 28–511 enclose the Sema domain; it reads RVYLTFDELR…SNEGVSQVSL (484 aa). N-linked (GlcNAc...) asparagine glycosylation occurs at Asn-81. Cys-101 and Cys-112 are joined by a disulfide. Asn-123 is a glycosylation site (N-linked (GlcNAc...) asparagine). A disulfide bond links Cys-130 and Cys-139. 2 N-linked (GlcNAc...) asparagine glycosylation sites follow: Asn-252 and Asn-268. Cystine bridges form between Cys-266–Cys-378 and Cys-290–Cys-338. Residue Asn-465 is glycosylated (N-linked (GlcNAc...) asparagine). Cys-514 and Cys-532 are joined by a disulfide. The region spanning 571–655 is the Ig-like C2-type domain; the sequence is AYRNAAEIVQ…TENSFKQTIA (85 aa). Residues Asn-585 and Asn-586 are each glycosylated (N-linked (GlcNAc...) asparagine). A disulfide bridge connects residues Cys-643 and Cys-709. Basic and acidic residues predominate over residues 712-731; it reads TRQQHQQGDESQKMRGDYGK. Positions 712–751 are disordered; sequence TRQQHQQGDESQKMRGDYGKLKALINSRKSRNRRNQLPES.

The protein belongs to the semaphorin family. As to quaternary structure, interacts with PLXND1. In terms of tissue distribution, expressed intensely in the heart, skeletal muscle, colon, small intestine, ovary, testis, and prostate. Faint expression ubiquitously among other organs, including brain.

Its subcellular location is the secreted. In terms of biological role, binds to plexin family members and plays an important role in the regulation of developmental processes. Required for normal cardiovascular development during embryogenesis. Functions as attractant for growing axons, and thereby plays an important role in axon growth and axon guidance. This chain is Semaphorin-3C (SEMA3C), found in Homo sapiens (Human).